The following is a 185-amino-acid chain: ATP synthase subunit delta (185 aa).

Belongs to the ATPase delta chain family. In terms of assembly, F-type ATPases have 2 components, F(1) - the catalytic core - and F(0) - the membrane proton channel. F(1) has five subunits: alpha(3), beta(3), gamma(1), delta(1), epsilon(1). F(0) has three main subunits: a(1), b(2) and c(10-14). The alpha and beta chains form an alternating ring which encloses part of the gamma chain. F(1) is attached to F(0) by a central stalk formed by the gamma and epsilon chains, while a peripheral stalk is formed by the delta and b chains.

It localises to the cell inner membrane. Functionally, f(1)F(0) ATP synthase produces ATP from ADP in the presence of a proton or sodium gradient. F-type ATPases consist of two structural domains, F(1) containing the extramembraneous catalytic core and F(0) containing the membrane proton channel, linked together by a central stalk and a peripheral stalk. During catalysis, ATP synthesis in the catalytic domain of F(1) is coupled via a rotary mechanism of the central stalk subunits to proton translocation. Its function is as follows. This protein is part of the stalk that links CF(0) to CF(1). It either transmits conformational changes from CF(0) to CF(1) or is implicated in proton conduction. In Phocaeicola vulgatus (strain ATCC 8482 / DSM 1447 / JCM 5826 / CCUG 4940 / NBRC 14291 / NCTC 11154) (Bacteroides vulgatus), this protein is ATP synthase subunit delta.